The chain runs to 515 residues: Histone-lysine N-methyltransferase SET5 (515 aa).

Residues 114 to 386 (SKVEIRECEE…KDEELVTTYV (273 aa)) enclose the SET domain. Polar residues predominate over residues 452 to 462 (ALQRSNGGSSS). The tract at residues 452-476 (ALQRSNGGSSSDLRRKSSIRNRKPD) is disordered.

This sequence belongs to the class V-like SAM-binding methyltransferase superfamily. Histone-lysine methyltransferase family. SET5 subfamily.

The protein localises to the nucleus. Its subcellular location is the chromosome. It is found in the cytoplasm. It catalyses the reaction L-lysyl-[histone] + S-adenosyl-L-methionine = N(6)-methyl-L-lysyl-[histone] + S-adenosyl-L-homocysteine + H(+). Functionally, histone methyltransferase that monomethylates 'Lys-5', 'Lys-8' and 'Lys-12' of histone H4 (H4K5me1, H4K8me1 and H4K12me1, respectively), thereby controlling gene expression and remodeling chromatin structures. The sequence is that of Histone-lysine N-methyltransferase SET5 (SET5) from Candida glabrata (strain ATCC 2001 / BCRC 20586 / JCM 3761 / NBRC 0622 / NRRL Y-65 / CBS 138) (Yeast).